The primary structure comprises 275 residues: Interleukin-2 receptor subunit alpha (275 aa).

A signal peptide spans 1-21 (MEPSLLMWRFFVFIVVPGCVT). A Sushi 1 domain is found at 22–81 (EACHDDPPSLRNAMFKVFRYEVGTMINCDCKTGFRRVSAVMRCVGDSSHSAWENRCFCNS). Over 22–243 (EACHDDPPSL…DTFIFTTEYQ (222 aa)) the chain is Extracellular. Cystine bridges form between C24-C64, C49-C77, and C51-C79. Residue N80 is glycosylated (N-linked (GlcNAc...) asparagine). A disordered region spans residues 88-130 (QVKQVTPAPEEHREKKHTDAQNQTQPPEEADLPGHCEEPPPWE). Residues 96 to 106 (PEEHREKKHTD) show a composition bias toward basic and acidic residues. N-linked (GlcNAc...) asparagine glycosylation is present at N109. Residues 119 to 130 (LPGHCEEPPPWE) are compositionally biased toward basic and acidic residues. In terms of domain architecture, Sushi 2 spans 121–186 (GHCEEPPPWE…WTRPRLKCIR (66 aa)). 2 cysteine pairs are disulfide-bonded: C123-C168 and C152-C184. The disordered stretch occupies residues 188-221 (GEHGQASDDAEPQESTEAPPGSGTFLPTRMAGTT). A helical membrane pass occupies residues 244-262 (IAVAGCTLLLASILLLSCL). Over 263–275 (TWQRKWKKNRRTI) the chain is Cytoplasmic.

In terms of assembly, non-covalent dimer of an alpha and a beta subunit. IL2R exists in 3 different forms: a high affinity dimer, an intermediate affinity monomer (beta subunit), and a low affinity monomer (alpha subunit). The high and intermediate affinity forms also associate with a gamma subunit.

The protein resides in the membrane. Its function is as follows. Receptor for interleukin-2. The receptor is involved in the regulation of immune tolerance by controlling regulatory T cells (TREGs) activity. TREGs suppress the activation and expansion of autoreactive T-cells. In Bos taurus (Bovine), this protein is Interleukin-2 receptor subunit alpha (IL2RA).